The following is a 384-amino-acid chain: S-adenosylmethionine synthase (384 aa).

Residue His15 coordinates ATP. Asp17 contacts Mg(2+). Glu43 is a binding site for K(+). Positions 56 and 99 each coordinate L-methionine. The tract at residues Gln99 to Arg109 is flexible loop. Residues Asp164 to Lys166, Arg230 to Phe231, Asp239, Arg245 to Lys246, Ala262, and Lys266 contribute to the ATP site. An L-methionine-binding site is contributed by Asp239. Lys270 lines the L-methionine pocket.

It belongs to the AdoMet synthase family. As to quaternary structure, homotetramer; dimer of dimers. Mg(2+) serves as cofactor. Requires K(+) as cofactor.

Its subcellular location is the cytoplasm. The catalysed reaction is L-methionine + ATP + H2O = S-adenosyl-L-methionine + phosphate + diphosphate. It functions in the pathway amino-acid biosynthesis; S-adenosyl-L-methionine biosynthesis; S-adenosyl-L-methionine from L-methionine: step 1/1. Its function is as follows. Catalyzes the formation of S-adenosylmethionine (AdoMet) from methionine and ATP. The overall synthetic reaction is composed of two sequential steps, AdoMet formation and the subsequent tripolyphosphate hydrolysis which occurs prior to release of AdoMet from the enzyme. In Photobacterium profundum (strain SS9), this protein is S-adenosylmethionine synthase.